Here is a 257-residue protein sequence, read N- to C-terminus: Putative hydro-lyase Bphy_2364 (257 aa).

It belongs to the D-glutamate cyclase family.

The chain is Putative hydro-lyase Bphy_2364 from Paraburkholderia phymatum (strain DSM 17167 / CIP 108236 / LMG 21445 / STM815) (Burkholderia phymatum).